Consider the following 224-residue polypeptide: 2-C-methyl-D-erythritol 4-phosphate cytidylyltransferase (224 aa).

The protein belongs to the IspD/TarI cytidylyltransferase family. IspD subfamily.

It carries out the reaction 2-C-methyl-D-erythritol 4-phosphate + CTP + H(+) = 4-CDP-2-C-methyl-D-erythritol + diphosphate. It functions in the pathway isoprenoid biosynthesis; isopentenyl diphosphate biosynthesis via DXP pathway; isopentenyl diphosphate from 1-deoxy-D-xylulose 5-phosphate: step 2/6. Its function is as follows. Catalyzes the formation of 4-diphosphocytidyl-2-C-methyl-D-erythritol from CTP and 2-C-methyl-D-erythritol 4-phosphate (MEP). The sequence is that of 2-C-methyl-D-erythritol 4-phosphate cytidylyltransferase from Saccharopolyspora erythraea (strain ATCC 11635 / DSM 40517 / JCM 4748 / NBRC 13426 / NCIMB 8594 / NRRL 2338).